The following is a 102-amino-acid chain: Protein iss (102 aa).

In terms of biological role, increases serum survival and confers group II surface exclusion. This is Protein iss (iss) from Escherichia coli.